The following is a 618-amino-acid chain: Sulfite reductase [NADPH] flavoprotein alpha-component (618 aa).

In terms of domain architecture, Flavodoxin-like spans 64–202 (VTLISASQTG…QAQQWRQQVV (139 aa)). Residues 70–75 (SQTGNA), 117–120 (STQG), and 153–162 (LGDTSYEHFC) contribute to the FMN site. The FAD-binding FR-type domain maps to 253-467 (TAPLTAQLSV…IEHNDNFRLP (215 aa)). Residues threonine 341, lysine 375, 405 to 408 (RLYS), 423 to 425 (TVG), tyrosine 429, and 438 to 441 (GGAS) contribute to the FAD site. Residues 538–539 (SR), 544–548 (KIYVQ), and aspartate 580 each bind NADP(+). Tyrosine 618 lines the FAD pocket.

It belongs to the NADPH-dependent sulphite reductase flavoprotein subunit CysJ family. The protein in the N-terminal section; belongs to the flavodoxin family. This sequence in the C-terminal section; belongs to the flavoprotein pyridine nucleotide cytochrome reductase family. Alpha(8)-beta(8). The alpha component is a flavoprotein, the beta component is a hemoprotein. FAD is required as a cofactor. FMN serves as cofactor.

It catalyses the reaction hydrogen sulfide + 3 NADP(+) + 3 H2O = sulfite + 3 NADPH + 4 H(+). The protein operates within sulfur metabolism; hydrogen sulfide biosynthesis; hydrogen sulfide from sulfite (NADPH route): step 1/1. In terms of biological role, component of the sulfite reductase complex that catalyzes the 6-electron reduction of sulfite to sulfide. This is one of several activities required for the biosynthesis of L-cysteine from sulfate. The flavoprotein component catalyzes the electron flow from NADPH -&gt; FAD -&gt; FMN to the hemoprotein component. In Yersinia pseudotuberculosis serotype I (strain IP32953), this protein is Sulfite reductase [NADPH] flavoprotein alpha-component.